Reading from the N-terminus, the 495-residue chain is Trigger factor (495 aa).

The PPIase FKBP-type domain occupies 162–243; that stretch reads DDFVSIDLSA…VKSLKERELP (82 aa). Basic and acidic residues predominate over residues 425 to 437; it reads DTDGNEIDPKEYF. The interval 425-495 is disordered; the sequence is DTDGNEIDPK…TDDDSENAEK (71 aa). Residues 450–461 show a composition bias toward low complexity; it reads SADAEASENSEA. Residues 486–495 are compositionally biased toward acidic residues; the sequence is TDDDSENAEK.

The protein belongs to the FKBP-type PPIase family. Tig subfamily.

The protein resides in the cytoplasm. The catalysed reaction is [protein]-peptidylproline (omega=180) = [protein]-peptidylproline (omega=0). Its function is as follows. Involved in protein export. Acts as a chaperone by maintaining the newly synthesized protein in an open conformation. Functions as a peptidyl-prolyl cis-trans isomerase. This is Trigger factor from Corynebacterium kroppenstedtii (strain DSM 44385 / JCM 11950 / CIP 105744 / CCUG 35717).